The chain runs to 274 residues: 2-dehydro-3-deoxyphosphooctonate aldolase (274 aa).

The protein belongs to the KdsA family.

The protein localises to the cytoplasm. The enzyme catalyses D-arabinose 5-phosphate + phosphoenolpyruvate + H2O = 3-deoxy-alpha-D-manno-2-octulosonate-8-phosphate + phosphate. The protein operates within carbohydrate biosynthesis; 3-deoxy-D-manno-octulosonate biosynthesis; 3-deoxy-D-manno-octulosonate from D-ribulose 5-phosphate: step 2/3. Its pathway is bacterial outer membrane biogenesis; lipopolysaccharide biosynthesis. This is 2-dehydro-3-deoxyphosphooctonate aldolase from Rickettsia rickettsii (strain Iowa).